A 140-amino-acid polypeptide reads, in one-letter code: Peptide methionine sulfoxide reductase MsrB (140 aa).

A MsrB domain is found at 9–131 (DALWREKLTP…NSASIVLDSE (123 aa)). The Zn(2+) site is built by Cys48, Cys51, Cys97, and Cys100. The active-site Nucleophile is the Cys120.

It belongs to the MsrB Met sulfoxide reductase family. Zn(2+) serves as cofactor.

It carries out the reaction L-methionyl-[protein] + [thioredoxin]-disulfide + H2O = L-methionyl-(R)-S-oxide-[protein] + [thioredoxin]-dithiol. The chain is Peptide methionine sulfoxide reductase MsrB from Cellvibrio japonicus (strain Ueda107) (Pseudomonas fluorescens subsp. cellulosa).